The chain runs to 257 residues: Fimbrial assembly protein, serogroup E1 (257 aa).

In Dichelobacter nodosus (Bacteroides nodosus), this protein is Fimbrial assembly protein, serogroup E1 (fimB).